The following is a 310-amino-acid chain: GMP synthase [glutamine-hydrolyzing] subunit B (310 aa).

In terms of domain architecture, GMPS ATP-PPase spans Phe2–Arg185. Ser29–Ser35 serves as a coordination point for ATP.

In terms of assembly, heterodimer composed of a glutamine amidotransferase subunit (A) and a GMP-binding subunit (B).

The enzyme catalyses XMP + L-glutamine + ATP + H2O = GMP + L-glutamate + AMP + diphosphate + 2 H(+). It functions in the pathway purine metabolism; GMP biosynthesis; GMP from XMP (L-Gln route): step 1/1. In terms of biological role, catalyzes the synthesis of GMP from XMP. This chain is GMP synthase [glutamine-hydrolyzing] subunit B, found in Methanococcus vannielii (strain ATCC 35089 / DSM 1224 / JCM 13029 / OCM 148 / SB).